Here is a 498-residue protein sequence, read N- to C-terminus: Flavin-dependent halogenase otaD (498 aa).

FAD is bound by residues G14, G17, and E47. Residues S326 and G327 each coordinate chloride. V328 lines the FAD pocket.

It belongs to the flavin-dependent halogenase family.

The catalysed reaction is ochratoxin B + FADH2 + chloride + O2 = ochratoxin A + FAD + 2 H2O. It functions in the pathway mycotoxin biosynthesis. Functionally, flavin-dependent halogenase; part of the gene cluster that mediates the biosynthesis of ochratoxin A (OTA), a mycotoxin composed of a chlorinated type I polyketide dihydroisocoumarin moiety linked to L-phenylalanine, and demonstrated to have nephrotoxic, immunotoxic, genotoxic, neurotoxic, and teratogenic properties. OtaD chlorinates ochratoxin B (OTB) at the C-5 position to form OTA. The pathway begins with the highly reducing polyketide synthase otaA that catalyzes the formation of the isocoumarin group during the initial stages of biosynthesis, starting from one acetate and 4 malonate units, to originate the characteristic pentaketide skeleton 7-methylmellein (7-MM) of the OTA molecule. The newly identified cyclase otaY might be involved in the polyketide cyclization reaction during the initial steps of the OTA biosynthesis. 7-MM is then oxidized into 7-carboxymellein (also called ochratoxin beta) by the cytochrome P450 monooxygenase otaC. The NRPS encoded by the otaB gene is involved in the linking of phenylalanine to the dihydroisocoumarin ring. The reaction catalyzed by NRPS results in the production of ochratoxin B (OTB), which is the non-chlorinated analog of OTA and which subsequently serves as the substrate of the halogenase otaD for chlorination activity to form the final molecular structure of OTA, containing a chlorine atom in the C-5 position of the molecule. The chain is Flavin-dependent halogenase otaD from Aspergillus carbonarius (strain ITEM 5010).